Here is a 194-residue protein sequence, read N- to C-terminus: Small ribosomal subunit protein uS4 (194 aa).

An N6-acetyllysine modification is found at Lys66. Lys93 is covalently cross-linked (Glycyl lysine isopeptide (Lys-Gly) (interchain with G-Cter in SUMO2)). The S4 RNA-binding domain maps to 108–182 (RRLQTQVFKL…VKRKNAKKGQ (75 aa)). Lys116 is modified (N6-acetyllysine). Lys139 participates in a covalent cross-link: Glycyl lysine isopeptide (Lys-Gly) (interchain with G-Cter in SUMO2). Ser153 carries the post-translational modification Phosphoserine. Position 155 is an N6-acetyllysine (Lys155). A disordered region spans residues 162–194 (RSPYGGGRPGRVKRKNAKKGQGGAGAGDDEEED). Ser163 carries the post-translational modification Phosphoserine.

It belongs to the universal ribosomal protein uS4 family. As to quaternary structure, component of the small ribosomal subunit. Part of the small subunit (SSU) processome, composed of more than 70 proteins and the RNA chaperone small nucleolar RNA (snoRNA) U3.

It localises to the cytoplasm. Its subcellular location is the nucleus. It is found in the nucleolus. Component of the small ribosomal subunit. The ribosome is a large ribonucleoprotein complex responsible for the synthesis of proteins in the cell. Part of the small subunit (SSU) processome, first precursor of the small eukaryotic ribosomal subunit. During the assembly of the SSU processome in the nucleolus, many ribosome biogenesis factors, an RNA chaperone and ribosomal proteins associate with the nascent pre-rRNA and work in concert to generate RNA folding, modifications, rearrangements and cleavage as well as targeted degradation of pre-ribosomal RNA by the RNA exosome. This Papio anubis (Olive baboon) protein is Small ribosomal subunit protein uS4 (RPS9).